The chain runs to 53 residues: Sec-independent protein translocase protein TatA (53 aa).

The helical transmembrane segment at 1–21 (MGMSVSHLLIVLLIIFVLFGA) threads the bilayer.

This sequence belongs to the TatA/E family. The Tat system comprises two distinct complexes: a TatABC complex, containing multiple copies of TatA, TatB and TatC subunits, and a separate TatA complex, containing only TatA subunits. Substrates initially bind to the TatABC complex, which probably triggers association of the separate TatA complex to form the active translocon.

The protein localises to the cell inner membrane. Its function is as follows. Part of the twin-arginine translocation (Tat) system that transports large folded proteins containing a characteristic twin-arginine motif in their signal peptide across membranes. TatA could form the protein-conducting channel of the Tat system. In Rickettsia massiliae (strain Mtu5), this protein is Sec-independent protein translocase protein TatA.